The primary structure comprises 200 residues: Glycerol-3-phosphate acyltransferase (200 aa).

5 helical membrane-spanning segments follow: residues phenylalanine 2 to valine 22, lysine 51 to alanine 71, alanine 84 to phenylalanine 104, leucine 114 to valine 134, and leucine 158 to leucine 178.

It belongs to the PlsY family. In terms of assembly, probably interacts with PlsX.

The protein resides in the cell inner membrane. It carries out the reaction an acyl phosphate + sn-glycerol 3-phosphate = a 1-acyl-sn-glycero-3-phosphate + phosphate. Its pathway is lipid metabolism; phospholipid metabolism. In terms of biological role, catalyzes the transfer of an acyl group from acyl-phosphate (acyl-PO(4)) to glycerol-3-phosphate (G3P) to form lysophosphatidic acid (LPA). This enzyme utilizes acyl-phosphate as fatty acyl donor, but not acyl-CoA or acyl-ACP. The sequence is that of Glycerol-3-phosphate acyltransferase from Neisseria meningitidis serogroup A / serotype 4A (strain DSM 15465 / Z2491).